A 277-amino-acid polypeptide reads, in one-letter code: Nickel import ATP-binding protein NikE (277 aa).

Residues 14 to 253 (YRTVSLVGRS…EHPASRALQR (240 aa)) form the ABC transporter domain. Residue 46 to 53 (GRSGSGKS) participates in ATP binding.

Belongs to the ABC transporter superfamily. Nickel importer (TC 3.A.1.5.3) family. As to quaternary structure, the complex is composed of two ATP-binding proteins (NikD and NikE), two transmembrane proteins (NikB and NikC) and a solute-binding protein (NikA).

It is found in the cell inner membrane. It carries out the reaction Ni(2+)(out) + ATP + H2O = Ni(2+)(in) + ADP + phosphate + H(+). Part of the ABC transporter complex NikABCDE involved in nickel import. Responsible for energy coupling to the transport system. The polypeptide is Nickel import ATP-binding protein NikE (Rhodospirillum rubrum (strain ATCC 11170 / ATH 1.1.1 / DSM 467 / LMG 4362 / NCIMB 8255 / S1)).